A 95-amino-acid chain; its full sequence is Histone-like DNA-binding protein (95 aa).

This sequence belongs to the bacterial histone-like protein family.

The protein is Histone-like DNA-binding protein of Rickettsia typhi (strain ATCC VR-144 / Wilmington).